Reading from the N-terminus, the 642-residue chain is Threonine--tRNA ligase (642 aa).

The 61-residue stretch at 1-61 (MPVITLPDGS…ENDATLAIIT (61 aa)) folds into the TGS domain. Positions 243-534 (DHRKIGKQLD…LTEEFAGFFP (292 aa)) are catalytic. Zn(2+) contacts are provided by Cys334, His385, and His511.

It belongs to the class-II aminoacyl-tRNA synthetase family. In terms of assembly, homodimer. The cofactor is Zn(2+).

Its subcellular location is the cytoplasm. It carries out the reaction tRNA(Thr) + L-threonine + ATP = L-threonyl-tRNA(Thr) + AMP + diphosphate + H(+). Functionally, catalyzes the attachment of threonine to tRNA(Thr) in a two-step reaction: L-threonine is first activated by ATP to form Thr-AMP and then transferred to the acceptor end of tRNA(Thr). Also edits incorrectly charged L-seryl-tRNA(Thr). The protein is Threonine--tRNA ligase of Salmonella choleraesuis (strain SC-B67).